Reading from the N-terminus, the 107-residue chain is Class I hydrophobin 3 (107 aa).

An N-terminal signal peptide occupies residues 1 to 18 (MQFKVLAALVIGATLAAA). 4 disulfides stabilise this stretch: Cys26–Cys86, Cys33–Cys80, Cys34–Cys67, and Cys87–Cys100. Asn35 and Asn89 each carry an N-linked (GlcNAc...) asparagine glycan.

This sequence belongs to the fungal hydrophobin family. In terms of assembly, self-assembles to form functional amyloid fibrils called rodlets. Self-assembly into fibrillar rodlets occurs spontaneously at hydrophobic:hydrophilic interfaces and the rodlets further associate laterally to form amphipathic monolayers.

It localises to the secreted. The protein resides in the cell wall. Functionally, aerial growth, conidiation, and dispersal of filamentous fungi in the environment rely upon a capability of their secreting small amphipathic proteins called hydrophobins (HPBs) with low sequence identity. Class I can self-assemble into an outermost layer of rodlet bundles on aerial cell surfaces, conferring cellular hydrophobicity that supports fungal growth, development and dispersal; whereas Class II form highly ordered films at water-air interfaces through intermolecular interactions but contribute nothing to the rodlet structure. Pnh3 is a class I hydrophobin that might be involved in the attachment of the hydrophilic wall of hyphae to the hydrophobic surface of wood under inorganic phosphate (Pi)-deficient conditions and enable the mycelium to degrade efficiently the components of wood and to acquire nutrients containing Pi. In Pholiota nameko, this protein is Class I hydrophobin 3.